A 273-amino-acid polypeptide reads, in one-letter code: Tyrosinase (273 aa).

The N-terminal stretch at 1 to 18 is a signal peptide; sequence MLLFTMGLLLAILQPSTG. Residues asparagine 86, asparagine 111, and asparagine 161 are each glycosylated (N-linked (GlcNAc...) asparagine). Cu cation contacts are provided by histidine 180, histidine 202, and histidine 211. N-linked (GlcNAc...) asparagine glycosylation occurs at asparagine 230.

It belongs to the tyrosinase family. Cu(2+) serves as cofactor.

Its subcellular location is the melanosome membrane. It localises to the melanosome. It catalyses the reaction 2 L-dopa + O2 = 2 L-dopaquinone + 2 H2O. It carries out the reaction L-tyrosine + O2 = L-dopaquinone + H2O. In terms of biological role, this is a copper-containing oxidase that functions in the formation of pigments such as melanins and other polyphenolic compounds. Catalyzes the initial and rate limiting step in the cascade of reactions leading to melanin production from tyrosine. In addition to hydroxylating tyrosine to DOPA (3,4-dihydroxyphenylalanine), also catalyzes the oxidation of DOPA to DOPA-quinone, and possibly the oxidation of DHI (5,6-dihydroxyindole) to indole-5,6 quinone. This chain is Tyrosinase (TYR), found in Coturnix japonica (Japanese quail).